The chain runs to 271 residues: Multivesicular body subunit 12A (271 aa).

In terms of domain architecture, MABP spans 7–149 (SAPLAGLVWS…GFAIWCKKSK (143 aa)). Position 128 is a phosphothreonine (Thr128). The tract at residues 149–192 (KAPRPVPKPRTLSQDMRGLSLDPPKEPSKGSHPERTLSRLGSRA) is disordered. Residues 153–158 (PVPKPR) carry the SH3-binding motif. Phosphoserine occurs at positions 161 and 168. Basic and acidic residues predominate over residues 171 to 185 (PPKEPSKGSHPERTL). The segment at 190–271 (SRASTLRRTD…AAARLPPSVS (82 aa)) is interaction with TSG101, VPS37B and VPS28. Phosphoserine occurs at positions 193 and 200. Phosphotyrosine is present on Tyr202. Ser205 carries the phosphoserine modification. The UMA domain occupies 213–263 (MDGVPFTLHPRFEGKSCGPLNLSAFGDLTIKSLADIEKEYNYGFVVEKTAA).

The protein belongs to the MVB12 family. In terms of assembly, component of the ESCRT-I complex (endosomal sorting complex required for transport I) which consists of TSG101, VPS28, a VPS37 protein (VPS37A to -D) and MVB12A or MVB12B in a 1:1:1:1 stoichiometry. Interacts with CD2AP and CIN85/SH3KBP1. Interacts with CD2AP (via one of the SH3 domains). Interacts with TSG101; the association appears to be mediated by the TSG101-VPS37 binary subcomplex. Interacts with VPS28. Interacts with VPS37B; the association appears to be mediated by the TSG101-VPS37 binary subcomplex. Interacts with VPS37C; the association appears to be mediated by the TSG101-VPS37 binary subcomplex. Interacts with VPS37D; the association appears to be mediated by the TSG101-VPS37 binary subcomplex. Interacts with CEP55. Phosphorylated on Tyr-202 upon EGF stimulation. Phosphorylation is required for interaction with CD2AP and CIN85/SH3KBP1.

It is found in the cytoplasm. The protein localises to the cytoskeleton. It localises to the nucleus. The protein resides in the endosome. Its subcellular location is the microtubule organizing center. It is found in the centrosome. The protein localises to the late endosome membrane. Component of the ESCRT-I complex, a regulator of vesicular trafficking process. Required for the sorting of endocytic ubiquitinated cargos into multivesicular bodies. May be involved in the ligand-mediated internalization and down-regulation of EGF receptor. This chain is Multivesicular body subunit 12A (Mvb12a), found in Mus musculus (Mouse).